A 23-amino-acid chain; its full sequence is Acidic phospholipase CHA-E6a (23 aa).

The protein belongs to the phospholipase A2 family. Group II subfamily. D49 sub-subfamily. Ca(2+) serves as cofactor. In terms of processing, contains 7 disulfide bonds. As to expression, expressed by the venom gland.

The protein localises to the secreted. The enzyme catalyses a 1,2-diacyl-sn-glycero-3-phosphocholine + H2O = a 1-acyl-sn-glycero-3-phosphocholine + a fatty acid + H(+). Its function is as follows. Snake venom phospholipase A2 (PLA2) that shows high lipolytic (1048 umol/mg/min) and weak ADP-induced platelet aggregation activities. Also shows weak anticoagulant activity (IC(50) is less than 1.0 uM). PLA2 catalyzes the calcium-dependent hydrolysis of the 2-acyl groups in 3-sn-phosphoglycerides. This is Acidic phospholipase CHA-E6a from Crotalus horridus (Timber rattlesnake).